The following is a 349-amino-acid chain: Phenylalanine--tRNA ligase alpha subunit (349 aa).

Glu258 is a Mg(2+) binding site.

This sequence belongs to the class-II aminoacyl-tRNA synthetase family. Phe-tRNA synthetase alpha subunit type 1 subfamily. Tetramer of two alpha and two beta subunits. It depends on Mg(2+) as a cofactor.

The protein localises to the cytoplasm. The catalysed reaction is tRNA(Phe) + L-phenylalanine + ATP = L-phenylalanyl-tRNA(Phe) + AMP + diphosphate + H(+). The protein is Phenylalanine--tRNA ligase alpha subunit of Rickettsia bellii (strain RML369-C).